Reading from the N-terminus, the 755-residue chain is Polycomb protein SUZ12 (755 aa).

3 disordered regions span residues 26 to 79 (KMGN…RRIS), 333 to 377 (NANG…SRRA), and 392 to 420 (AVGRETRNNSNKRRRGGAYGEDHPPSDDR). Over residues 30–42 (KASSQAQKRSQSQ) the composition is skewed to low complexity. 2 stretches are compositionally biased toward polar residues: residues 43-57 (TGDSATSRPATDGSG) and 349-359 (TQPNGTHNEGT). The span at 411 to 420 (GEDHPPSDDR) shows a compositional bias: basic and acidic residues. The segment at 436–458 (FACLICGAENERLSQLRAHYMCH) adopts a C2H2-type zinc-finger fold. The interval 580–645 (IDDSWLLLKH…KADWLVSKRS (66 aa)) is polycomb protein VEFS-Box.

The protein belongs to the VEFS (VRN2-EMF2-FIS2-SU(Z)12) family. In terms of assembly, component of the polycomb repressive complex 2 (PRC2) that consists of four core subunits icluding EZH2, EED, SUZ12, and RBBP4, among which EZH2 is the catalytic subunit and which minimally requires EED and SUZ12 for catalysis.

The protein localises to the nucleus. Component of the of the Polycomb Repressive Complex 2 (PRC2), a histone H3 lysine methyltransferase responsible for generating mono-, di-, and tri-methylation on Lys27 (H3K27me1, H3K27me2 and H3K27me3). The tri-methylated form is known to be critical in gene repression, and its proper placement is essential in defining repression patterns during development. SUZ12 is not a catalytic subunit but is required for the complex regulation of histone H3 lysine methylation by EZH2. In Chaetomium thermophilum (strain DSM 1495 / CBS 144.50 / IMI 039719) (Thermochaetoides thermophila), this protein is Polycomb protein SUZ12.